A 106-amino-acid polypeptide reads, in one-letter code: Protein U4 (106 aa).

Residues 5 to 25 (FFISIILFVVLLNPSLIINMV) traverse the membrane as a helical segment.

The protein belongs to the nanovirus U4 protein family.

The protein localises to the membrane. The polypeptide is Protein U4 (DNA-U4) (Cicer arietinum (Chickpea)).